The sequence spans 111 residues: UPF0375 protein ule-4 (111 aa).

Positions 1–18 are cleaved as a signal peptide; sequence MNSRLVLLLAVSVALVSA. 2 N-linked (GlcNAc...) asparagine glycosylation sites follow: Asn23 and Asn58.

This sequence belongs to the UPF0375 family.

The protein localises to the secreted. In Caenorhabditis elegans, this protein is UPF0375 protein ule-4.